The following is a 364-amino-acid chain: MKTFLVCALEPSANLHLKEVLKAYKKDFGEFELHGIYDESLCKEFDLNSKPLYSSHEFSAMGFIEVLPLIFKAKKAIKELVNLTLSQTMDAVLCIDSPAFNIPFAKALKKAGSKIPRIYYILPQVWAWKKGRIPIIESHFDILASILPFDNQFFNKSTYIGHPLLDEIKEFKNQEDINHTFSKKDDEKTIAFLPGSRRSEIRRLMPIFKELSQKFKGEKILCVPSFNLEKLEVYGDISEFKIESNTPKVLKKADFAFICSGTATLEAALVGTPFVLAYKAKAIDIFIAKLFVKLKHIGLANIFCDFAGKEALNPEFLQDKVNVLNLYEAYNKYDYKAFFAKVDFLKEYLQFGSAKNLAKILNEI.

It belongs to the LpxB family.

The catalysed reaction is a lipid X + a UDP-2-N,3-O-bis[(3R)-3-hydroxyacyl]-alpha-D-glucosamine = a lipid A disaccharide + UDP + H(+). It participates in bacterial outer membrane biogenesis; LPS lipid A biosynthesis. Condensation of UDP-2,3-diacylglucosamine and 2,3-diacylglucosamine-1-phosphate to form lipid A disaccharide, a precursor of lipid A, a phosphorylated glycolipid that anchors the lipopolysaccharide to the outer membrane of the cell. This is Lipid-A-disaccharide synthase from Campylobacter jejuni (strain RM1221).